Reading from the N-terminus, the 518-residue chain is Laccase (518 aa).

Residues 1 to 21 (MSRFQSLLSFVLVSLAAVANA) form the signal peptide. 2 Plastocyanin-like domains span residues 23–148 (IGPV…FVVY) and 160–302 (IDND…ILRY). Residues N72 and N75 are each glycosylated (N-linked (GlcNAc...) asparagine). Positions 85, 87, 130, and 132 each coordinate Cu cation. 2 disulfides stabilise this stretch: C106–C507 and C138–C226. N-linked (GlcNAc...) asparagine glycosylation is present at N229. The tract at residues 308-330 (VEPTTTQTTSTKPLNEADLHPLT) is disordered. 3 N-linked (GlcNAc...) asparagine glycosylation sites follow: N354, N362, and N398. Residues 369–489 (SVPVLLQILS…AGFAVVLAED (121 aa)) enclose the Plastocyanin-like 3 domain. Residues H416, H419, H421, H471, C472, H473, and H477 each coordinate Cu cation.

The protein belongs to the multicopper oxidase family. Cu cation serves as cofactor.

The protein localises to the secreted. It carries out the reaction 4 hydroquinone + O2 = 4 benzosemiquinone + 2 H2O. Functionally, lignin degradation and detoxification of lignin-derived products. Cleaves the C-C and C-O bonds of some phenolic lignin model compounds (such as O- and P-quinols, aminophenols and phenylenediamine). May also be involved in synthesis of phenoxazinone pigments. This chain is Laccase (LCC3-1), found in Pycnoporus cinnabarinus (Cinnabar-red polypore).